The sequence spans 122 residues: Large ribosomal subunit protein bL12 (122 aa).

It belongs to the bacterial ribosomal protein bL12 family. Homodimer. Part of the ribosomal stalk of the 50S ribosomal subunit. Forms a multimeric L10(L12)X complex, where L10 forms an elongated spine to which 2 to 4 L12 dimers bind in a sequential fashion. Binds GTP-bound translation factors.

In terms of biological role, forms part of the ribosomal stalk which helps the ribosome interact with GTP-bound translation factors. Is thus essential for accurate translation. The sequence is that of Large ribosomal subunit protein bL12 from Acinetobacter baumannii (strain AB0057).